A 322-amino-acid polypeptide reads, in one-letter code: Cell division control protein 10 (322 aa).

Methionine 1 bears the N-acetylmethionine mark. Residues 29 to 302 form the Septin-type G domain; sequence KGFQFNIMVV…EGFRARQLIA (274 aa). The segment at 39 to 46 is G1 motif; sequence GQSGLGKS. GTP contacts are provided by residues 39–46, threonine 74, glycine 100, and 180–188; these read GQSGLGKS and KSDTLTLDE. Positions 97–100 are G3 motif; sequence DTPG. The tract at residues 179-182 is G4 motif; it reads GKSD. Threonine 216 carries the post-translational modification Phosphothreonine. Residues glycine 236 and arginine 251 each contribute to the GTP site.

It belongs to the TRAFAC class TrmE-Era-EngA-EngB-Septin-like GTPase superfamily. Septin GTPase family. Component of the septin complex which consists of CDC3, CDC10, CDC11, CDC12 and probably SHS1 and rearranges to a cortical collar of highly ordered filaments at the mother-bud-neck. A complex formed by CDC3, CDC10, CDC11 and CDC12 is capable of forming long filaments in vitro and the components seem to be present in a 2:2:2:2 arrangement in vivo. The filaments are proposed to be formed by the end-to-end polymerization of CDC3-CDC12-CDC11 complexes with CDC10 serving as a bridge to bundle the polymers into paired filaments. Component of the GIN4 complex composed of at least BNI5, CDC3, CDC10, CDC11, CDC12, GIN4, NAP1 and SHS1. Self-associates. Interacts with SYP1.

It localises to the membrane. Its subcellular location is the bud neck. Functionally, septins are GTPases involved in cytokinesis that assemble early in the cell cycle as a patch at the incipient bud site and form a ring approximate 15 minutes before bud emergence, which transforms into an hour-glass shaped collar of cortical filaments that spans both sides of the mother-bud neck. This collar persists until just before cytokinesis, when it splits into two rings that occupy opposite sides of the neck. The septins at the bud neck serve as a structural scaffold that recruits different components involved in diverse processes at specific stages during the cell cycle. Many proteins bind asymmetrically to the septin collar. The septin assembly is regulated by protein kinases GIN4 and/or CLA4. May act by recruiting MYO1 and HOF1, a protein involved in septation, to the site of cleavage. Septins are also involved in cell morphogenesis, bud site selection, chitin deposition, cell cycle regulation, cell compartmentalization and spore wall formation. The sequence is that of Cell division control protein 10 (CDC10) from Saccharomyces cerevisiae (strain ATCC 204508 / S288c) (Baker's yeast).